A 356-amino-acid chain; its full sequence is cGAMP-activated phospholipase (356 aa).

The region spanning 15–206 (LSLNGGGARG…VANNPSYIGL (192 aa)) is the PNPLA domain. Positions 19–24 (GGGARG) match the GXGXXG motif. Residues 58 to 62 (GTSIG) carry the GXSXG motif. The active-site Nucleophile is the Ser60. Catalysis depends on Asp193, which acts as the Proton acceptor. The DGA/G signature appears at 193–195 (DGG).

The protein belongs to the patatin family.

It catalyses the reaction a 1,2-diacyl-sn-glycero-3-phosphocholine + H2O = a 2-acyl-sn-glycero-3-phosphocholine + a fatty acid + H(+). The catalysed reaction is 1,2-di-(9Z-octadecenoyl)-sn-glycero-3-phosphoethanolamine + 2 H2O = sn-glycero-3-phosphoethanolamine + 2 (9Z)-octadecenoate + 2 H(+). With respect to regulation, phospholipase activity is specifically activated upon 3',3'-cGAMP binding, which is produced by the cognate cyclic nucleotide synthase encoded in the same operon. In terms of biological role, effector phospholipase of a CBASS antiviral system. CBASS (cyclic oligonucleotide-based antiphage signaling system) provides immunity against bacteriophages. The CD-NTase protein (DncV) synthesizes cyclic nucleotides in response to infection; these serve as specific second messenger signals. The signals activate a diverse range of effectors, leading to bacterial cell death and thus abortive phage infection. A type II-A(GA) CBASS system. Functionally, phospholipase that is activated upon binding to the cyclic dinucleotide (CDN) second messenger 3',3'-cyclic GMP-AMP (cGAMP). Degrades phospholipids in the cell membrane. Its function is as follows. Protects E.coli against phage infection. When capV and dncV are introduced in E.coli MG1655 there is 1000-fold protection against phage P1; protection against other phage (T2, T4, T5, T6 and lambda-vir) requires the 2 subsequent genes (cap2 and cap3). Upon P1 phage infection the activating molecule is produced between 30 and 40 minutes. Activation leads to bacterial cell lysis and death, which occurs before the phage has finished its replication cycle, thus protecting non-infected bacteria by aborting the phage infection and preventing its propagation. In another paper the capV-dncV-cap2-cap3 operon gives 10(4)-10(5)-fold protection against phages lambda, T2, T4 and T6, about 1000-fold protection against P1 and 10-fold protection against T5. The protein is cGAMP-activated phospholipase of Escherichia coli (strain TW11681).